A 207-amino-acid chain; its full sequence is Outer-membrane lipoprotein carrier protein (207 aa).

Positions 1–22 (MKLSEKFCVFLFFLLFTSTTHA) are cleaved as a signal peptide.

This sequence belongs to the LolA family. In terms of assembly, monomer.

The protein resides in the periplasm. Functionally, participates in the translocation of lipoproteins from the inner membrane to the outer membrane. Only forms a complex with a lipoprotein if the residue after the N-terminal Cys is not an aspartate (The Asp acts as a targeting signal to indicate that the lipoprotein should stay in the inner membrane). In Nitrosospira multiformis (strain ATCC 25196 / NCIMB 11849 / C 71), this protein is Outer-membrane lipoprotein carrier protein.